Here is a 393-residue protein sequence, read N- to C-terminus: F-box protein KIB4 (393 aa).

The F-box domain occupies 12–59 (AKQPILVLDLVRLVLERLSFVDFHRARCVSSVWYSASKSCIGGTNPTA).

The protein localises to the cytoplasm. It is found in the nucleus. It localises to the nucleolus. Its function is as follows. Component of SCF(ASK-cullin-F-box) E3 ubiquitin ligase complexes, which may mediate the ubiquitination and subsequent proteasomal degradation of target proteins. Required for brassinosteroid (BR) signal transduction. Mediates ASK7/BIN2/SK21 inactivation both by competing with substrate binding (e.g. BZR1) and by promoting its ubiquitination and subsequent proteasomal degradation. The protein is F-box protein KIB4 of Arabidopsis thaliana (Mouse-ear cress).